The following is a 455-amino-acid chain: Kynurenine 3-monooxygenase (455 aa).

The protein belongs to the aromatic-ring hydroxylase family. KMO subfamily. Requires FAD as cofactor.

The enzyme catalyses L-kynurenine + NADPH + O2 + H(+) = 3-hydroxy-L-kynurenine + NADP(+) + H2O. Its pathway is cofactor biosynthesis; NAD(+) biosynthesis; quinolinate from L-kynurenine: step 1/3. In terms of biological role, catalyzes the hydroxylation of L-kynurenine (L-Kyn) to form 3-hydroxy-L-kynurenine (L-3OHKyn). Required for synthesis of quinolinic acid. This is Kynurenine 3-monooxygenase from Xanthomonas axonopodis pv. citri (strain 306).